The primary structure comprises 893 residues: Nitrate reductase [NADPH] (893 aa).

Residues 1–83 (MSVTTQQPAV…KPTPDAHVPR (83 aa)) form a disordered region. Positions 55 to 65 (PDFPLPPPANP) are enriched in pro residues. Residues 71-83 (DIDKPTPDAHVPR) are compositionally biased toward basic and acidic residues. C170 lines the Mo-molybdopterin pocket. The Cytochrome b5 heme-binding domain maps to 536 to 611 (NRIVELDELK…MPAYHIGTLS (76 aa)). 2 residues coordinate heme: H571 and H594. An FAD-binding FR-type domain is found at 641–752 (RTWSKALLSS…KGPIGKFEYL (112 aa)). FAD is bound by residues 695-698 (RSYT), 712-716 (LIKIY), 726-728 (KMT), S776, and T779. An NADP(+)-binding site is contributed by 863–872 (LVLVCGPEGL).

Belongs to the nitrate reductase family. As to quaternary structure, homodimer. FAD serves as cofactor. It depends on heme as a cofactor. The cofactor is Mo-molybdopterin.

The enzyme catalyses nitrite + NADP(+) + H2O = nitrate + NADPH + H(+). Functionally, nitrate reductase is a key enzyme involved in the first step of nitrate assimilation in plants, fungi and bacteria. The protein is Nitrate reductase [NADPH] (NIAD) of Leptosphaeria maculans (Blackleg fungus).